Consider the following 539-residue polypeptide: RING finger protein 37 (539 aa).

A disordered region spans residues 226 to 249 (PALPMESDCDPGGQSESQHSPCTL). Residues 239–249 (QSESQHSPCTL) are compositionally biased toward polar residues. The 81-residue stretch at 258–338 (DVPEEFLDPI…DRFLLQHSIS (81 aa)) folds into the U-box domain. Disordered regions lie at residues 359 to 399 (LPSR…EPTA) and 456 to 479 (GTRG…VSGP). Positions 374–395 (HYSLGMSASSSATSPLFSPTTS) are enriched in low complexity. Residues 481–526 (CASCKQAFSSYSTNEPVYQLPCGHLLCRPCLSEKQRSQPMMCTACR) form an RING-type zinc finger.

Interacts with UBE2L3. Interacts with VCP. In terms of tissue distribution, expressed in testis and placenta.

The protein localises to the nucleus. It catalyses the reaction S-ubiquitinyl-[E2 ubiquitin-conjugating enzyme]-L-cysteine + [acceptor protein]-L-lysine = [E2 ubiquitin-conjugating enzyme]-L-cysteine + N(6)-ubiquitinyl-[acceptor protein]-L-lysine.. It functions in the pathway protein modification; protein ubiquitination. May have a ubiquitin-protein ligase activity acting as an E3 ubiquitin-protein ligase or as a ubiquitin-ubiquitin ligase promoting elongation of ubiquitin chains on substrates. The polypeptide is RING finger protein 37 (Ubox5) (Mus musculus (Mouse)).